The chain runs to 120 residues: Large ribosomal subunit protein bL20 (120 aa).

It belongs to the bacterial ribosomal protein bL20 family.

Binds directly to 23S ribosomal RNA and is necessary for the in vitro assembly process of the 50S ribosomal subunit. It is not involved in the protein synthesizing functions of that subunit. The chain is Large ribosomal subunit protein bL20 from Desulforudis audaxviator (strain MP104C).